The chain runs to 213 residues: MFNQSYLNVYFICGTSDVPSHRTIHEVLEAALKAGITLFQFREKGESALKGNDKLVLAKELQHLCHQYDVPFIVNDDVSLAKEINADGIHVGQDDAKVKEIAQYFTDKIIGFSISDLDEYAKSDLTHVDYIGVGPIYPTPSKHDAHTPVGPEMIATFKEMNPQLPIVAIGGINTSNVAPIVEAGANGISVISAISKSENIEKTVNRFKDFFNN.

4-amino-2-methyl-5-(diphosphooxymethyl)pyrimidine-binding positions include 40-44 (QFREK) and Asn75. Mg(2+) is bound by residues Asp76 and Asp95. Position 113 (Ser113) interacts with 4-amino-2-methyl-5-(diphosphooxymethyl)pyrimidine. Residue 139–141 (TPS) coordinates 2-[(2R,5Z)-2-carboxy-4-methylthiazol-5(2H)-ylidene]ethyl phosphate. Position 142 (Lys142) interacts with 4-amino-2-methyl-5-(diphosphooxymethyl)pyrimidine. 2-[(2R,5Z)-2-carboxy-4-methylthiazol-5(2H)-ylidene]ethyl phosphate-binding positions include Gly171 and 191-192 (IS).

The protein belongs to the thiamine-phosphate synthase family. It depends on Mg(2+) as a cofactor.

It catalyses the reaction 2-[(2R,5Z)-2-carboxy-4-methylthiazol-5(2H)-ylidene]ethyl phosphate + 4-amino-2-methyl-5-(diphosphooxymethyl)pyrimidine + 2 H(+) = thiamine phosphate + CO2 + diphosphate. The catalysed reaction is 2-(2-carboxy-4-methylthiazol-5-yl)ethyl phosphate + 4-amino-2-methyl-5-(diphosphooxymethyl)pyrimidine + 2 H(+) = thiamine phosphate + CO2 + diphosphate. It carries out the reaction 4-methyl-5-(2-phosphooxyethyl)-thiazole + 4-amino-2-methyl-5-(diphosphooxymethyl)pyrimidine + H(+) = thiamine phosphate + diphosphate. It participates in cofactor biosynthesis; thiamine diphosphate biosynthesis; thiamine phosphate from 4-amino-2-methyl-5-diphosphomethylpyrimidine and 4-methyl-5-(2-phosphoethyl)-thiazole: step 1/1. Its function is as follows. Condenses 4-methyl-5-(beta-hydroxyethyl)thiazole monophosphate (THZ-P) and 2-methyl-4-amino-5-hydroxymethyl pyrimidine pyrophosphate (HMP-PP) to form thiamine monophosphate (TMP). In Staphylococcus aureus (strain MRSA252), this protein is Thiamine-phosphate synthase.